The primary structure comprises 67 residues: uncharacterized protein (67 aa).

This sequence to E.coli YbdD.

This is an uncharacterized protein from Escherichia coli O157:H7.